Here is a 198-residue protein sequence, read N- to C-terminus: Molybdenum cofactor guanylyltransferase (198 aa).

GTP contacts are provided by residues 14–16 (LAG), Lys-27, Asp-73, and Asp-103. A Mg(2+)-binding site is contributed by Asp-103.

This sequence belongs to the MobA family. In terms of assembly, monomer. Mg(2+) is required as a cofactor.

The protein resides in the cytoplasm. The enzyme catalyses Mo-molybdopterin + GTP + H(+) = Mo-molybdopterin guanine dinucleotide + diphosphate. Its function is as follows. Transfers a GMP moiety from GTP to Mo-molybdopterin (Mo-MPT) cofactor (Moco or molybdenum cofactor) to form Mo-molybdopterin guanine dinucleotide (Mo-MGD) cofactor. In Pseudomonas paraeruginosa (strain DSM 24068 / PA7) (Pseudomonas aeruginosa (strain PA7)), this protein is Molybdenum cofactor guanylyltransferase.